Consider the following 526-residue polypeptide: Glycoprotein (526 aa).

The first 19 residues, 1–19, serve as a signal peptide directing secretion; it reads MPSQAVFLVLTTVFSQCVG. Topologically, residues 20–459 are virion surface; that stretch reads KFPIYTIPDK…DLGLPEWKRY (440 aa). An N-linked (GlcNAc...) asparagine; by host glycan is attached at asparagine 338. Residues 460 to 480 traverse the membrane as a helical segment; that stretch reads FLIGVAALTLFALTIFVVVCC. The S-palmitoyl cysteine; by host moiety is linked to residue cysteine 480. Residues 481–526 are Intravirion-facing; it reads RRVRRRERAKPNPVELIRKVSVTSQSGKVIPSWESYKVEAEGQSQA.

Belongs to the lyssavirus glycoprotein family. As to quaternary structure, homotrimer. Interacts with matrix protein. Glycosylated and palmitoylated by host. Glycosylation is crucial for glycoprotein export at the cell surface.

The protein resides in the virion membrane. Attaches the virus to host cellular receptor, inducing endocytosis of the virion. In the endosome, the acidic pH induces conformational changes in the glycoprotein trimer, which trigger fusion between virus and cell membrane. There is convincing in vitro evidence that the muscular form of the nicotinic acetylcholine receptor (nAChR), the neuronal cell adhesion molecule (NCAM), and the p75 neurotrophin receptor (p75NTR) bind glycoprotein and thereby facilitate rabies virus entry into cells. The chain is Glycoprotein (G) from Khujand virus (KHUV).